Reading from the N-terminus, the 139-residue chain is Holo-[acyl-carrier-protein] synthase (139 aa).

Mg(2+)-binding residues include D8 and E57.

It belongs to the P-Pant transferase superfamily. AcpS family. Mg(2+) is required as a cofactor.

The protein resides in the cytoplasm. The enzyme catalyses apo-[ACP] + CoA = holo-[ACP] + adenosine 3',5'-bisphosphate + H(+). Its function is as follows. Transfers the 4'-phosphopantetheine moiety from coenzyme A to a Ser of acyl-carrier-protein. The protein is Holo-[acyl-carrier-protein] synthase of Sinorhizobium medicae (strain WSM419) (Ensifer medicae).